We begin with the raw amino-acid sequence, 495 residues long: Angiopoietin-2 (495 aa).

The signal sequence occupies residues 1–18 (MWQIVFFTLSCDLVRAAA). Residues asparagine 88, asparagine 118, asparagine 132, asparagine 150, asparagine 239, and asparagine 303 are each glycosylated (N-linked (GlcNAc...) asparagine). Positions 165-247 (STNKLEKQIL…VNNSVLQKQQ (83 aa)) form a coiled coil. The Fibrinogen C-terminal domain maps to 274-494 (KEEQIIYRDC…GTTMMIRPAD (221 aa)). A disulfide bond links cysteine 283 and cysteine 312. Ca(2+) contacts are provided by aspartate 428, aspartate 430, cysteine 432, and cysteine 434. Cystine bridges form between cysteine 432/cysteine 434 and cysteine 436/cysteine 449.

Interacts with TEK/TIE2, competing for the same binding site as ANGPT1. Interacts with ITGA5. Interacts with SVEP1/polydom. Interacts with THBD; this interaction significantly inhibits the generation of activated PC and TAFIa/CPB2 by the thrombin/thrombomodulin complex.

The protein resides in the secreted. Functionally, binds to TEK/TIE2, competing for the ANGPT1 binding site, and modulating ANGPT1 signaling. Can induce tyrosine phosphorylation of TEK/TIE2 in the absence of ANGPT1. In the absence of angiogenic inducers, such as VEGF, ANGPT2-mediated loosening of cell-matrix contacts may induce endothelial cell apoptosis with consequent vascular regression. In concert with VEGF, it may facilitate endothelial cell migration and proliferation, thus serving as a permissive angiogenic signal. Involved in the regulation of lymphangiogenesis. The chain is Angiopoietin-2 (ANGPT2) from Canis lupus familiaris (Dog).